The primary structure comprises 323 residues: Apolipoprotein E (323 aa).

Residues 1-18 (MKVLWAALVVTLLAGCWA) form the signal peptide. 8 consecutive repeat copies span residues 86 to 107 (ALMD…EQLG), 108 to 129 (PMTS…ARLR), 130 to 151 (SDME…AMLG), 152 to 173 (QSSE…KRVL), 174 to 195 (RDAE…EGAE), 196 to 217 (RSVS…ERNA), 218 to 239 (KVGA…QQLR), and 240 to 261 (GQLE…EQIQ). The interval 86-261 (ALMDETMKEV…HLEEMREQIQ (176 aa)) is 8 X 22 AA approximate tandem repeats. A Methionine sulfoxide modification is found at methionine 149. Residue serine 153 is modified to Phosphoserine. The LDL and other lipoprotein receptors binding stretch occupies residues 164–174 (HMRKLRKRVLR). 168–171 (LRKR) contributes to the heparin binding site. The lipid-binding and lipoprotein association stretch occupies residues 216-296 (NAKVGALATQ…SWFEPLLEDM (81 aa)). 235-242 (GQQLRGQL) lines the heparin pocket. Residues 272–323 (DQIRQKAEAFQARLKSWFEPLLEDMQRQWDGLVEKVQAAVATIPTSKPVEEP) form a homooligomerization region. Residues 284-296 (RLKSWFEPLLEDM) form a specificity for association with VLDL region.

Belongs to the apolipoprotein A1/A4/E family. As to quaternary structure, homotetramer. May interact with ABCA1; functionally associated with ABCA1 in the biogenesis of HDLs. May interact with APP/A4 amyloid-beta peptide; the interaction is extremely stable in vitro but its physiological significance is unclear. May interact with MAPT. May interact with MAP2. In the cerebrospinal fluid, interacts with secreted SORL1. Interacts with PMEL; this allows the loading of PMEL luminal fragment on ILVs to induce fibril nucleation. In terms of processing, APOE exists as multiple glycosylated and sialylated glycoforms within cells and in plasma. The extent of glycosylation and sialylation are tissue and context specific. Glycated in plasma VLDL. Post-translationally, phosphorylated by FAM20C in the extracellular medium.

The protein localises to the secreted. The protein resides in the extracellular space. It localises to the extracellular matrix. It is found in the extracellular vesicle. Its subcellular location is the endosome. The protein localises to the multivesicular body. In terms of biological role, APOE is an apolipoprotein, a protein associating with lipid particles, that mainly functions in lipoprotein-mediated lipid transport between organs via the plasma and interstitial fluids. APOE is a core component of plasma lipoproteins and is involved in their production, conversion and clearance. Apolipoproteins are amphipathic molecules that interact both with lipids of the lipoprotein particle core and the aqueous environment of the plasma. As such, APOE associates with chylomicrons, chylomicron remnants, very low density lipoproteins (VLDL) and intermediate density lipoproteins (IDL) but shows a preferential binding to high-density lipoproteins (HDL). It also binds a wide range of cellular receptors including the LDL receptor/LDLR and the very low-density lipoprotein receptor/VLDLR that mediate the cellular uptake of the APOE-containing lipoprotein particles. Finally, APOE also has a heparin-binding activity and binds heparan-sulfate proteoglycans on the surface of cells, a property that supports the capture and the receptor-mediated uptake of APOE-containing lipoproteins by cells. In Canis lupus familiaris (Dog), this protein is Apolipoprotein E (APOE).